Consider the following 698-residue polypeptide: Elongation factor G 1 (698 aa).

The region spanning 8–290 (ERYRNIGIVA…AVVDFLPAPI (283 aa)) is the tr-type G domain. GTP contacts are provided by residues 17 to 24 (AHVDAGKT), 88 to 92 (DTPGH), and 142 to 145 (NKMD).

It belongs to the TRAFAC class translation factor GTPase superfamily. Classic translation factor GTPase family. EF-G/EF-2 subfamily.

The protein resides in the cytoplasm. In terms of biological role, catalyzes the GTP-dependent ribosomal translocation step during translation elongation. During this step, the ribosome changes from the pre-translocational (PRE) to the post-translocational (POST) state as the newly formed A-site-bound peptidyl-tRNA and P-site-bound deacylated tRNA move to the P and E sites, respectively. Catalyzes the coordinated movement of the two tRNA molecules, the mRNA and conformational changes in the ribosome. This is Elongation factor G 1 from Shewanella frigidimarina (strain NCIMB 400).